Here is a 341-residue protein sequence, read N- to C-terminus: S-adenosylmethionine:tRNA ribosyltransferase-isomerase (341 aa).

This sequence belongs to the QueA family. In terms of assembly, monomer.

The protein resides in the cytoplasm. The catalysed reaction is 7-aminomethyl-7-carbaguanosine(34) in tRNA + S-adenosyl-L-methionine = epoxyqueuosine(34) in tRNA + adenine + L-methionine + 2 H(+). It functions in the pathway tRNA modification; tRNA-queuosine biosynthesis. Transfers and isomerizes the ribose moiety from AdoMet to the 7-aminomethyl group of 7-deazaguanine (preQ1-tRNA) to give epoxyqueuosine (oQ-tRNA). The protein is S-adenosylmethionine:tRNA ribosyltransferase-isomerase of Clostridium botulinum (strain Alaska E43 / Type E3).